A 194-amino-acid polypeptide reads, in one-letter code: Adenylate kinase (194 aa).

Residue 10–15 (GAGKGT) coordinates ATP. The segment at 30 to 59 (STGDMLRAAVAAGTPVGLKAKAVMESGGLV) is NMP. AMP-binding positions include Thr-31, Arg-36, 57–59 (GLV), 85–88 (GFPR), and Gln-92. Residues 126-142 (NRAAEAKAKGEPVRKDD) form an LID region. Position 127 (Arg-127) interacts with ATP. AMP is bound by residues Arg-139 and Arg-150. ATP is bound at residue Ala-178.

The protein belongs to the adenylate kinase family. Monomer.

It localises to the cytoplasm. It catalyses the reaction AMP + ATP = 2 ADP. Its pathway is purine metabolism; AMP biosynthesis via salvage pathway; AMP from ADP: step 1/1. Its function is as follows. Catalyzes the reversible transfer of the terminal phosphate group between ATP and AMP. Plays an important role in cellular energy homeostasis and in adenine nucleotide metabolism. In Azorhizobium caulinodans (strain ATCC 43989 / DSM 5975 / JCM 20966 / LMG 6465 / NBRC 14845 / NCIMB 13405 / ORS 571), this protein is Adenylate kinase.